The following is a 110-amino-acid chain: Large ribosomal subunit protein uL22 (110 aa).

The protein belongs to the universal ribosomal protein uL22 family. In terms of assembly, part of the 50S ribosomal subunit.

Functionally, this protein binds specifically to 23S rRNA; its binding is stimulated by other ribosomal proteins, e.g. L4, L17, and L20. It is important during the early stages of 50S assembly. It makes multiple contacts with different domains of the 23S rRNA in the assembled 50S subunit and ribosome. The globular domain of the protein is located near the polypeptide exit tunnel on the outside of the subunit, while an extended beta-hairpin is found that lines the wall of the exit tunnel in the center of the 70S ribosome. The protein is Large ribosomal subunit protein uL22 of Colwellia psychrerythraea (strain 34H / ATCC BAA-681) (Vibrio psychroerythus).